A 643-amino-acid chain; its full sequence is Fructose-1,6-bisphosphatase class 3 (643 aa).

The protein belongs to the FBPase class 3 family. Requires Mn(2+) as cofactor.

It carries out the reaction beta-D-fructose 1,6-bisphosphate + H2O = beta-D-fructose 6-phosphate + phosphate. The protein operates within carbohydrate biosynthesis; gluconeogenesis. This is Fructose-1,6-bisphosphatase class 3 from Lacticaseibacillus casei (strain BL23) (Lactobacillus casei).